Here is a 285-residue protein sequence, read N- to C-terminus: Golgi phosphoprotein 3-like (285 aa).

A disordered region spans residues 1 to 43 (MTTLTHRTRRTEVSKSSEKKIESEEDTNQERSPDNEDPGDSKD). Basic and acidic residues predominate over residues 10 to 43 (RTEVSKSSEKKIESEEDTNQERSPDNEDPGDSKD). Trp67 and Arg76 together coordinate a 1,2-diacyl-sn-glycero-3-phospho-(1D-myo-inositol 4-phosphate). Ser112 bears the Phosphoserine mark. A 1,2-diacyl-sn-glycero-3-phospho-(1D-myo-inositol 4-phosphate) contacts are provided by Arg157 and Arg160. The segment at 176 to 187 (EKQNFLLFDMTT) is beta-hairpin required for oligomerization.

Belongs to the GOLPH3/VPS74 family. Homooligomer. Does not interact MYO18; differs from GOLPH3 by its inability to interact with MYO18. May interact with ARF1. Expressed in a subset of tissues tested with higher expression in salivary gland, small intestine and skin (at protein level).

It is found in the golgi apparatus. The protein localises to the golgi stack membrane. Its subcellular location is the trans-Golgi network membrane. Functionally, phosphatidylinositol-4-phosphate-binding protein that may antagonize the action of GOLPH3 which is required for the process of vesicle budding at the Golgi and anterograde transport to the plasma membrane. In Mus musculus (Mouse), this protein is Golgi phosphoprotein 3-like (Golph3l).